Reading from the N-terminus, the 365-residue chain is 3-methyl-L-tyrosine peroxygenase (365 aa).

313–317 serves as a coordination point for heme; the sequence is HIGVC.

Heme serves as cofactor.

It carries out the reaction 3-methyl-L-tyrosine + H2O2 = 5-hydroxy-3-methyl-L-tyrosine + H2O. The protein operates within antibiotic biosynthesis. Heme-containing peroxygenase that mediates the hydroxylation of 3-methyl-L-tyrosine (3-Me-Tyr) into 3-hydroxy-5-methyl-L-tyrosine (3-OH-5-Me-Tyr) in biosynthesis of saframycin A, a potent antitumor antibiotic that belongs to the tetrahydroisoquinoline family. Involved in biosynthesis of 3-hydroxy-5-methyl-O-methyltyrosine (3-OH-5-Me-OMe-Tyr), a core structure of saframycin A. In Streptomyces lavendulae, this protein is 3-methyl-L-tyrosine peroxygenase.